The chain runs to 334 residues: MTESVVCTGAVSTVKEVWEERIKKHHEDVKREKEFQQKLVRIWEDRVSLTKLKEKVTREDGRIILRIEKEEWKTLPSSLLKLNQLQEWQLHRTGLLKIPEFIGRFQHLIVLDLSRNTISEIPRGIGLLTRLQELILSYNKIKTVPKELSNCASLEKLELAVNRDISDLPTELSKLLKLTHLDLSMNQFTTIPLAVLDMPALEWLDMGSNSLQQLPDTLDRMQSLHTLWLQRNEITCLPETIRNMKNLGTLVLSNNKLQDIPGCMEEMTSLRFVNFRDNPLRLEVTLPPSDDVDGEEEQELFGLQFMHAYIQESRRTEDQVNCLTHTPSSTRSDG.

LRR repeat units lie at residues Glu59–Leu82, Asn83–Phe105, Gln106–Leu128, Thr129–Cys151, Ser153–Leu175, Leu176–Met198, Pro199–Met221, Ser223–Met244, Lys245–Ser269, and Phe272–Glu295.

As to quaternary structure, interacts with MYH7 (via C-terminus). Expressed in heart and skeletal muscle (at protein level). Also detected in kidney (at protein level). Not detected in other tissues tested (at protein level).

It is found in the cytoplasm. It localises to the myofibril. The protein resides in the sarcomere. The protein localises to the m line. Component of the sarcomeric M-band which plays a role in myocyte response to biomechanical stress. May regulate expression of other M-band proteins via an SRF-dependent pathway. Important for normal contractile function in heart. This is Leucine-rich repeat-containing protein 39 from Rattus norvegicus (Rat).